Consider the following 507-residue polypeptide: ATP synthase subunit alpha (507 aa).

171 to 178 (GDRQTGKT) serves as a coordination point for ATP.

Belongs to the ATPase alpha/beta chains family. F-type ATPases have 2 components, CF(1) - the catalytic core - and CF(0) - the membrane proton channel. CF(1) has five subunits: alpha(3), beta(3), gamma(1), delta(1), epsilon(1). CF(0) has three main subunits: a(1), b(2) and c(9-12). The alpha and beta chains form an alternating ring which encloses part of the gamma chain. CF(1) is attached to CF(0) by a central stalk formed by the gamma and epsilon chains, while a peripheral stalk is formed by the delta and b chains.

The protein localises to the cell inner membrane. The enzyme catalyses ATP + H2O + 4 H(+)(in) = ADP + phosphate + 5 H(+)(out). Produces ATP from ADP in the presence of a proton gradient across the membrane. The alpha chain is a regulatory subunit. The protein is ATP synthase subunit alpha of Bdellovibrio bacteriovorus (strain ATCC 15356 / DSM 50701 / NCIMB 9529 / HD100).